The following is a 223-amino-acid chain: Type III pantothenate kinase (223 aa).

ATP is bound at residue 17–24 (DIGNTRIH). Substrate contacts are provided by residues tyrosine 81 and 85–88 (GIDR). Aspartate 87 functions as the Proton acceptor in the catalytic mechanism. Aspartate 102 is a binding site for K(+). Serine 105 provides a ligand contact to ATP. Threonine 157 serves as a coordination point for substrate.

It belongs to the type III pantothenate kinase family. As to quaternary structure, homodimer. NH4(+) is required as a cofactor. K(+) serves as cofactor.

Its subcellular location is the cytoplasm. It catalyses the reaction (R)-pantothenate + ATP = (R)-4'-phosphopantothenate + ADP + H(+). The protein operates within cofactor biosynthesis; coenzyme A biosynthesis; CoA from (R)-pantothenate: step 1/5. With respect to regulation, not regulated by feedback inhibition by CoA and its thioesters as described for many other pantothenate kinases. Not inhibited by N-pentylpantothenamide (N5-Pan), and this compound cannot act as a substrate either. In terms of biological role, catalyzes the phosphorylation of pantothenate (Pan), the first step in CoA biosynthesis. Can also utilize CTP or GTP instead of ATP as a phosphoryl donor, albeit to a lesser extent. This Helicobacter pylori (strain ATCC 700392 / 26695) (Campylobacter pylori) protein is Type III pantothenate kinase (coaX).